The following is a 119-amino-acid chain: Large ribosomal subunit protein uL24 (119 aa).

It belongs to the universal ribosomal protein uL24 family. Part of the 50S ribosomal subunit.

One of two assembly initiator proteins, it binds directly to the 5'-end of the 23S rRNA, where it nucleates assembly of the 50S subunit. Its function is as follows. One of the proteins that surrounds the polypeptide exit tunnel on the outside of the subunit. The chain is Large ribosomal subunit protein uL24 from Leifsonia xyli subsp. xyli (strain CTCB07).